Consider the following 151-residue polypeptide: Methylglyoxal synthase (151 aa).

The MGS-like domain maps to 6 to 151 (RVMPAHKHIA…DYDAYLAERV (146 aa)). Residues histidine 19, lysine 23, 45-48 (TGTT), and 65-66 (SG) contribute to the substrate site. Aspartate 71 (proton donor/acceptor) is an active-site residue. Histidine 98 contacts substrate.

This sequence belongs to the methylglyoxal synthase family.

The catalysed reaction is dihydroxyacetone phosphate = methylglyoxal + phosphate. Functionally, catalyzes the formation of methylglyoxal from dihydroxyacetone phosphate. The sequence is that of Methylglyoxal synthase from Aliivibrio fischeri (strain ATCC 700601 / ES114) (Vibrio fischeri).